The primary structure comprises 760 residues: GLC7-interacting protein 4 (760 aa).

2 disordered regions span residues 449 to 573 and 593 to 626; these read KKKP…SLQS and KSAS…SSST. Composition is skewed to low complexity over residues 454–474 and 494–506; these read ITKL…ASPS and SSRS…VRTT. S497 and S501 each carry phosphoserine. Residues 512-525 show a composition bias toward basic and acidic residues; the sequence is AETKKSVVSPEKRK. Residues 534 to 554 are compositionally biased toward polar residues; sequence SSSLQSYTNKQQTSYLNSTRH. 2 stretches are compositionally biased toward low complexity: residues 561–573 and 594–626; these read SKLN…SLQS and SAST…SSST. S609 carries the phosphoserine modification.

This sequence belongs to the GIP4 family. Interacts with GLC7.

Its subcellular location is the cytoplasm. In terms of biological role, GLC7 phosphatase-regulatory protein involved in GLC7 subcellular redistribution and chromosome segregation. This Saccharomyces cerevisiae (strain ATCC 204508 / S288c) (Baker's yeast) protein is GLC7-interacting protein 4 (GIP4).